We begin with the raw amino-acid sequence, 128 residues long: L-ectoine synthase (128 aa).

Belongs to the ectoine synthase family.

It catalyses the reaction (2S)-4-acetamido-2-aminobutanoate = L-ectoine + H2O. The protein operates within amine and polyamine biosynthesis; ectoine biosynthesis; L-ectoine from L-aspartate 4-semialdehyde: step 3/3. In terms of biological role, catalyzes the circularization of gamma-N-acetyl-alpha,gamma-diaminobutyric acid (ADABA) to ectoine (1,4,5,6-tetrahydro-2-methyl-4-pyrimidine carboxylic acid), which is an excellent osmoprotectant. The sequence is that of L-ectoine synthase from Oceanobacillus iheyensis (strain DSM 14371 / CIP 107618 / JCM 11309 / KCTC 3954 / HTE831).